The primary structure comprises 2430 residues: Spatacsin (2430 aa).

Phosphoserine occurs at positions 1942 and 1943.

Interacts with AP5Z1, AP5B1, AP5S1 and ZFYVE26. In terms of tissue distribution, ubiquitously expressed at low level. Expressed in embryonic and adult cortical projection neurons.

It localises to the cytoplasm. The protein resides in the cytosol. It is found in the nucleus. Its subcellular location is the cell projection. The protein localises to the axon. It localises to the dendrite. The protein resides in the synapse. Functionally, may play a role in neurite plasticity by maintaining cytoskeleton stability and regulating synaptic vesicle transport. The chain is Spatacsin (Spg11) from Mus musculus (Mouse).